The following is a 130-amino-acid chain: Cystatin domain-containing protein 1 (130 aa).

The first 23 residues, 1-23, serve as a signal peptide directing secretion; it reads MSWKVPMLVGLVVLGTHIWTINK. A Cystatin domain is found at 37-116; the sequence is ASVEFAVAQF…CVFQVDARPW (80 aa). Disulfide bonds link cysteine 84–cysteine 94 and cysteine 107–cysteine 127.

This sequence belongs to the cystatin family.

The protein localises to the secreted. May play a specialized role in spermatogenesis. In Rattus norvegicus (Rat), this protein is Cystatin domain-containing protein 1.